Reading from the N-terminus, the 440-residue chain is Phosphatidylcholine-sterol acyltransferase (440 aa).

Residues 1–24 (MGLPGSPWQWVLLLLGLLLPPATS) form the signal peptide. An N-linked (GlcNAc...) asparagine glycan is attached at N44. C74 and C98 form a disulfide bridge. A glycan (N-linked (GlcNAc...) asparagine) is linked at N108. The active-site Nucleophile is S205. N296 is a glycosylation site (N-linked (GlcNAc...) asparagine). A disulfide bond links C337 and C380. D369 functions as the Charge relay system in the catalytic mechanism. Residue N397 is glycosylated (N-linked (GlcNAc...) asparagine). H401 serves as the catalytic Charge relay system. N408 carries an N-linked (GlcNAc...) asparagine glycan.

The protein belongs to the AB hydrolase superfamily. Lipase family. Detected in blood plasma (at protein level).

It localises to the secreted. The catalysed reaction is a sterol + a 1,2-diacyl-sn-glycero-3-phosphocholine = a sterol ester + a 1-acyl-sn-glycero-3-phosphocholine. It carries out the reaction a 1-O-alkyl-2-acetyl-sn-glycero-3-phosphocholine + H2O = a 1-O-alkyl-sn-glycero-3-phosphocholine + acetate + H(+). It catalyses the reaction 1-hexadecanoyl-2-(9Z,12Z-octadecadienoyl)-sn-glycero-3-phosphocholine + H2O = (9Z,12Z)-octadecadienoate + 1-hexadecanoyl-sn-glycero-3-phosphocholine + H(+). The enzyme catalyses 1-hexadecanoyl-2-(5Z,8Z,11Z,14Z-eicosatetraenoyl)-sn-glycero-3-phosphocholine + H2O = 1-hexadecanoyl-sn-glycero-3-phosphocholine + (5Z,8Z,11Z,14Z)-eicosatetraenoate + H(+). The catalysed reaction is 1-hexadecanoyl-2-(5Z,8Z,11Z,14Z-eicosatetraenoyl)-sn-glycero-3-phosphocholine + cholesterol = cholesteryl (5Z,8Z,11Z,14Z)-eicosatetraenoate + 1-hexadecanoyl-sn-glycero-3-phosphocholine. It carries out the reaction 1-hexadecanoyl-2-(9Z-octadecenoyl)-sn-glycero-3-phosphocholine + cholesterol = cholesteryl (9Z-octadecenoate) + 1-hexadecanoyl-sn-glycero-3-phosphocholine. It catalyses the reaction a 1-hexadecanoyl-2-acyl-sn-glycero-3-phosphocholine + (24S)-hydroxycholesterol = (24S)-24-hydroxycholesterol ester + 1-hexadecanoyl-sn-glycero-3-phosphocholine. The enzyme catalyses (24S)-hydroxycholesterol + 1-hexadecanoyl-2-(9Z,12Z-octadecadienoyl)-sn-glycero-3-phosphocholine = (24S)-hydroxycholesterol 3-linoleoate + 1-hexadecanoyl-sn-glycero-3-phosphocholine. The catalysed reaction is 1-hexadecanoyl-2-(8Z,11Z,14Z-eicosatrienoyl)-sn-glycero-3-phosphocholine + cholesterol = cholesteryl (8Z,11Z,14Z)-eicosatrienoate + 1-hexadecanoyl-sn-glycero-3-phosphocholine. It carries out the reaction 1-hexadecanoyl-2-(5Z,8Z,11Z-eicosatrienoyl)-sn-glycero-3-phosphocholine + cholesterol = cholesteryl (5Z,8Z,11Z)-eicosatrienoate + 1-hexadecanoyl-sn-glycero-3-phosphocholine. It catalyses the reaction 1-hexadecanoyl-2-(5Z,8Z,11Z,14Z,17Z-eicosapentaenoyl)-sn-glycero-3-phosphocholine + cholesterol = (5Z,8Z,11Z,14Z,17Z-eicosapentaenoyl)-cholesterol + 1-hexadecanoyl-sn-glycero-3-phosphocholine. The enzyme catalyses 1-hexadecanoyl-2-(9Z,12Z-octadecadienoyl)-sn-glycero-3-phosphocholine + cholesterol = cholesteryl (9Z,12Z)-octadecadienoate + 1-hexadecanoyl-sn-glycero-3-phosphocholine. The catalysed reaction is 1-hexadecanoyl-2-(6Z,9Z,12Z-octadecatrienoyl)-sn-glycero-3-phosphocholine + cholesterol = (6Z,9Z,12Z-octadecatrienoyl)-cholesterol + 1-hexadecanoyl-sn-glycero-3-phosphocholine. It carries out the reaction 1-hexadecanoyl-2-(11Z,14Z,17Z-eicosatrienoyl)-sn-glycero-3-phosphocholine + cholesterol = (11Z,14Z,17Z-eicosatrienoyl)-cholesterol + 1-hexadecanoyl-sn-glycero-3-phosphocholine. It catalyses the reaction 1-hexadecanoyl-2-(9Z,12Z,15Z-octadecatrienoyl)-sn-glycero-3-phosphocholine + cholesterol = (9Z,12Z,15Z-octadecatrienoyl)-cholesterol + 1-hexadecanoyl-sn-glycero-3-phosphocholine. The enzyme catalyses a 1-O-alkyl-2-acetyl-sn-glycero-3-phosphocholine + 1-hexadecanoyl-sn-glycero-3-phosphocholine = 1-hexadecanoyl-2-acetyl-sn-glycero-3-phosphocholine + a 1-O-alkyl-sn-glycero-3-phosphocholine. Central enzyme in the extracellular metabolism of plasma lipoproteins. Synthesized mainly in the liver and secreted into plasma where it converts cholesterol and phosphatidylcholines (lecithins) to cholesteryl esters and lysophosphatidylcholines on the surface of high and low density lipoproteins (HDLs and LDLs). The cholesterol ester is then transported back to the liver. Also produced in the brain by primary astrocytes, and esterifies free cholesterol on nascent APOE-containing lipoproteins secreted from glia and influences cerebral spinal fluid (CSF) APOE- and APOA1 levels. Together with APOE and the cholesterol transporter ABCA1, plays a key role in the maturation of glial-derived, nascent lipoproteins. Required for remodeling high-density lipoprotein particles into their spherical forms. Has a preference for plasma 16:0-18:2 or 18:O-18:2 phosphatidylcholines. Catalyzes the hydrolysis of 1-O-alkyl-2-acetyl-sn-glycero-3-phosphocholine (platelet-activating factor or PAF) to 1-O-alkyl-sn-glycero-3-phosphocholine (lyso-PAF). Also catalyzes the transfer of the acetate group from PAF to 1-hexadecanoyl-sn-glycero-3-phosphocholine forming lyso-PAF. Catalyzes the esterification of (24S)-hydroxycholesterol (24(S)OH-C), also known as cerebrosterol to produce 24(S)OH-C monoesters. The protein is Phosphatidylcholine-sterol acyltransferase (Lcat) of Rattus norvegicus (Rat).